Consider the following 776-residue polypeptide: Mitochondrial intermediate peptidase (776 aa).

A mitochondrion-targeting transit peptide spans 1 to 28 (MFVRFYKRLDRQYIQSQRRWILSSNKCL). The segment at 48–71 (DHWEESQAQNTSSEQDNKGKNSSY) is disordered. Positions 53-71 (SQAQNTSSEQDNKGKNSSY) are enriched in polar residues. His-567 provides a ligand contact to Zn(2+). Glu-568 is an active-site residue. His-571 and His-574 together coordinate Zn(2+).

The protein belongs to the peptidase M3 family. Zn(2+) is required as a cofactor.

It localises to the mitochondrion matrix. The catalysed reaction is Release of an N-terminal octapeptide as second stage of processing of some proteins imported into the mitochondrion.. In terms of biological role, cleaves proteins, imported into the mitochondrion, to their mature size. While most mitochondrial precursor proteins are processed to the mature form in one step by mitochondrial processing peptidase (MPP), the sequential cleavage by MIP of an octapeptide after initial processing by MPP is a required step for a subgroup of nuclear-encoded precursor proteins destined for the matrix or the inner membrane. The polypeptide is Mitochondrial intermediate peptidase (OCT1) (Eremothecium gossypii (strain ATCC 10895 / CBS 109.51 / FGSC 9923 / NRRL Y-1056) (Yeast)).